The following is a 131-amino-acid chain: Small ribosomal subunit protein bS6 (131 aa).

K93 is subject to N6-acetyllysine. The disordered stretch occupies residues 98 to 131 (EASPMVKAKDERRERRDDFANETADDAEAGDSEE). Basic and acidic residues predominate over residues 104 to 116 (KAKDERRERRDDF). A compositionally biased stretch (acidic residues) spans 120–131 (TADDAEAGDSEE).

It belongs to the bacterial ribosomal protein bS6 family.

Functionally, binds together with bS18 to 16S ribosomal RNA. The polypeptide is Small ribosomal subunit protein bS6 (Escherichia fergusonii (strain ATCC 35469 / DSM 13698 / CCUG 18766 / IAM 14443 / JCM 21226 / LMG 7866 / NBRC 102419 / NCTC 12128 / CDC 0568-73)).